The chain runs to 1181 residues: Poly [ADP-ribose] polymerase tankyrase (1181 aa).

18 ANK repeats span residues 56–85, 89–118, 122–151, 209–238, 242–271, 275–304, 362–394, 398–427, 431–458, 483–513, 519–548, 552–581, 585–614, 638–668, 672–701, 705–734, 738–767, and 771–799; these read RKSTPLHFAAGYGRREVVEFLLNSGASIQA, GGLHPLHNCCSFGHAEVVRLLLKAGASPNT, WNYTPLHEAASKGKVDVCLALLQHGANHTI, RRSTPLHLAAGYNRIGIVEILLANGADVHA, GGLVPLHNACSYGHFDVTKLLIQAGANVNA, WAFTPLHEAASKSRVEVCSLLLSRGADPTL, TGDTPLHLAVVSPDGKRKQLMELLTRKGSLLNE, AFLTPLHLAAELLHYDAMEVLLKQGAKVNA, LGQTPLHRCARDEQAVRLLLSYAADTNI, DSETHLLEAAKAGDLDTVRRIVLNNPISVNC, RHSTPLHFAAGFNRVPVVQFLLEHGAEVYA, GGLVPLHNACSYGHYEVTELLVKHGANVNV, WKFTPLHEAAAKGKYDICKLLLKHGADPMK, RGPSALLDAAKKGNLARVQRLVTPESINCRD, RNSTPLHLAAGYNNFECAEYLLENGADVNA, GGLIPLHNASSYGHLDIAALLIKHKTVVNA, WGFTPLHEAAQKGRTQLCSLLLAHGADAYM, and EGQTPIELATADDVKCLLQDAMATSLSQQ. Disordered stretches follow at residues 807-834 and 864-886; these read SLTSSSPAPDATAAAAPGTSSSSSSAIL and RISPAQGAEANGAEGSSSDDLLP. One can recognise an SAM domain in the interval 889–952; that stretch reads DTITNVSGFL…LKGIAQLRST (64 aa). The 206-residue stretch at 969–1174 folds into the PARP catalytic domain; it reads LPDDKEFVAV…YQIVKPDDSS (206 aa). Zn(2+)-binding residues include Cys-1091, His-1094, Cys-1099, and Cys-1102.

The protein belongs to the ARTD/PARP family. Interacts (via ANK repeats) with PI31.

It carries out the reaction NAD(+) + (ADP-D-ribosyl)n-acceptor = nicotinamide + (ADP-D-ribosyl)n+1-acceptor + H(+).. The catalysed reaction is L-aspartyl-[protein] + NAD(+) = 4-O-(ADP-D-ribosyl)-L-aspartyl-[protein] + nicotinamide. The enzyme catalyses L-glutamyl-[protein] + NAD(+) = 5-O-(ADP-D-ribosyl)-L-glutamyl-[protein] + nicotinamide. Its function is as follows. Stimulates proteasome activity, probably by ADP-ribosylation of PI31. Modulates 26S proteasome assembly. The protein is Poly [ADP-ribose] polymerase tankyrase of Drosophila melanogaster (Fruit fly).